A 440-amino-acid polypeptide reads, in one-letter code: Trigger factor (440 aa).

The 86-residue stretch at 163 to 248 (GDILTVDFLG…AKALKRRVAP (86 aa)) folds into the PPIase FKBP-type domain.

It belongs to the FKBP-type PPIase family. Tig subfamily.

The protein localises to the cytoplasm. It catalyses the reaction [protein]-peptidylproline (omega=180) = [protein]-peptidylproline (omega=0). Its function is as follows. Involved in protein export. Acts as a chaperone by maintaining the newly synthesized protein in an open conformation. Functions as a peptidyl-prolyl cis-trans isomerase. The chain is Trigger factor from Acidiphilium cryptum (strain JF-5).